We begin with the raw amino-acid sequence, 688 residues long: Potassium-transporting ATPase ATP-binding subunit (688 aa).

A run of 4 helical transmembrane segments spans residues 37–57 (FIVY…LFGI), 65–85 (ILFI…AEAI), 219–239 (IALQ…TASL), and 262–282 (LALL…AIGI). The 4-aspartylphosphate intermediate role is filled by Asp-313. ATP is bound by residues Asp-350, Glu-354, 383-390 (FTAKTRMS), and Lys-401. The Mg(2+) site is built by Asp-524 and Asp-528. 3 helical membrane-spanning segments follow: residues 586–606 (IAND…GLFP), 622–642 (AILS…PLAL), and 668–688 (IIAP…LGIV).

This sequence belongs to the cation transport ATPase (P-type) (TC 3.A.3) family. Type IA subfamily. The system is composed of three essential subunits: KdpA, KdpB and KdpC.

The protein localises to the cell membrane. It carries out the reaction K(+)(out) + ATP + H2O = K(+)(in) + ADP + phosphate + H(+). Functionally, part of the high-affinity ATP-driven potassium transport (or Kdp) system, which catalyzes the hydrolysis of ATP coupled with the electrogenic transport of potassium into the cytoplasm. This subunit is responsible for energy coupling to the transport system and for the release of the potassium ions to the cytoplasm. In Clostridium perfringens (strain ATCC 13124 / DSM 756 / JCM 1290 / NCIMB 6125 / NCTC 8237 / Type A), this protein is Potassium-transporting ATPase ATP-binding subunit.